Here is a 201-residue protein sequence, read N- to C-terminus: Potassium-transporting ATPase KdpC subunit (201 aa).

Residues 13–33 (IIFIIFTILCGGIYTIFITGI) form a helical membrane-spanning segment.

Belongs to the KdpC family. As to quaternary structure, the system is composed of three essential subunits: KdpA, KdpB and KdpC.

The protein resides in the cell membrane. Functionally, part of the high-affinity ATP-driven potassium transport (or Kdp) system, which catalyzes the hydrolysis of ATP coupled with the electrogenic transport of potassium into the cytoplasm. This subunit acts as a catalytic chaperone that increases the ATP-binding affinity of the ATP-hydrolyzing subunit KdpB by the formation of a transient KdpB/KdpC/ATP ternary complex. The sequence is that of Potassium-transporting ATPase KdpC subunit from Clostridium botulinum (strain Alaska E43 / Type E3).